A 174-amino-acid polypeptide reads, in one-letter code: NADH-quinone oxidoreductase subunit B 1 (174 aa).

Residues Cys-38, Cys-39, Cys-104, and Cys-133 each coordinate [4Fe-4S] cluster.

Belongs to the complex I 20 kDa subunit family. As to quaternary structure, NDH-1 is composed of 14 different subunits. Subunits NuoB, C, D, E, F, and G constitute the peripheral sector of the complex. [4Fe-4S] cluster serves as cofactor.

It localises to the cell membrane. The catalysed reaction is a quinone + NADH + 5 H(+)(in) = a quinol + NAD(+) + 4 H(+)(out). In terms of biological role, NDH-1 shuttles electrons from NADH, via FMN and iron-sulfur (Fe-S) centers, to quinones in the respiratory chain. The immediate electron acceptor for the enzyme in this species is believed to be ubiquinone. Couples the redox reaction to proton translocation (for every two electrons transferred, four hydrogen ions are translocated across the cytoplasmic membrane), and thus conserves the redox energy in a proton gradient. The chain is NADH-quinone oxidoreductase subunit B 1 from Chloroflexus aggregans (strain MD-66 / DSM 9485).